Reading from the N-terminus, the 413-residue chain is Tyrosine--tRNA ligase (413 aa).

Residues 59-68 (PTAPDIHLGH) carry the 'HIGH' region motif. The short motif at 243-247 (KMSKS) is the 'KMSKS' region element. Residue Lys246 coordinates ATP. The S4 RNA-binding domain occupies 351–411 (LAIGQLLKQA…GKRRFARVTL (61 aa)).

The protein belongs to the class-I aminoacyl-tRNA synthetase family. TyrS type 2 subfamily. Homodimer.

The protein resides in the cytoplasm. It catalyses the reaction tRNA(Tyr) + L-tyrosine + ATP = L-tyrosyl-tRNA(Tyr) + AMP + diphosphate + H(+). Its function is as follows. Catalyzes the attachment of tyrosine to tRNA(Tyr) in a two-step reaction: tyrosine is first activated by ATP to form Tyr-AMP and then transferred to the acceptor end of tRNA(Tyr). The polypeptide is Tyrosine--tRNA ligase (Burkholderia pseudomallei (strain 1710b)).